A 104-amino-acid polypeptide reads, in one-letter code: Iron-sulfur cluster assembly protein CyaY (104 aa).

The protein belongs to the frataxin family.

In terms of biological role, involved in iron-sulfur (Fe-S) cluster assembly. May act as a regulator of Fe-S biogenesis. The protein is Iron-sulfur cluster assembly protein CyaY of Vibrio atlanticus (strain LGP32) (Vibrio splendidus (strain Mel32)).